A 469-amino-acid chain; its full sequence is 3-isopropylmalate dehydratase large subunit (469 aa).

[4Fe-4S] cluster is bound by residues Cys-347, Cys-408, and Cys-411.

The protein belongs to the aconitase/IPM isomerase family. LeuC type 1 subfamily. Heterodimer of LeuC and LeuD. Requires [4Fe-4S] cluster as cofactor.

The enzyme catalyses (2R,3S)-3-isopropylmalate = (2S)-2-isopropylmalate. It participates in amino-acid biosynthesis; L-leucine biosynthesis; L-leucine from 3-methyl-2-oxobutanoate: step 2/4. Catalyzes the isomerization between 2-isopropylmalate and 3-isopropylmalate, via the formation of 2-isopropylmaleate. In Haemophilus influenzae (strain ATCC 51907 / DSM 11121 / KW20 / Rd), this protein is 3-isopropylmalate dehydratase large subunit.